The primary structure comprises 161 residues: Type-1 angiotensin II receptor-associated protein (161 aa).

Residues 1-26 (MELPAVNLKVILLVHWLLTTWGCLVF) are Extracellular-facing. The helical transmembrane segment at 27-47 (SSSYAWGNFTILALGVWAVAQ) threads the bilayer. Topologically, residues 48 to 53 (RDSIDA) are cytoplasmic. Residues 54-74 (IGMFLGGLVATIFLDIIYISI) traverse the membrane as a helical segment. Topologically, residues 75 to 86 (FYSSVATGDTGR) are extracellular. Residues 87 to 107 (FGAGMAILSLLLKPFSCCLVY) form a helical membrane-spanning segment. Topologically, residues 108-161 (HMHRERGGELPLRPDFFGPSQEHSAYQTIDSSSDAAADPFASLENKGQAVPRGY) are cytoplasmic. Residues 110 to 122 (HRERGGELPLRPD) are interaction with AGTR1. Residue Ser-127 is modified to Phosphoserine. Thr-135 carries the post-translational modification Phosphothreonine. Position 138 is a phosphoserine (Ser-138).

Interacts with RACK1, and with the C-terminal region of AGTR1. Ubiquitous but more abundant in kidney, testis and heart.

The protein localises to the endoplasmic reticulum membrane. It is found in the golgi apparatus membrane. Its subcellular location is the cytoplasmic vesicle membrane. In terms of biological role, appears to be a negative regulator of type-1 angiotensin II receptor-mediated signaling by regulating receptor internalization as well as mechanism of receptor desensitization such as phosphorylation. Also induces a decrease in angiotensin II-stimulated transcriptional activity. May play a role of negative regulator in cardiomyocyte hypertrophy induced by angiotensin II through an inhibition of p38 mitogen-activated protein kinase pathway. The chain is Type-1 angiotensin II receptor-associated protein (Agtrap) from Mus musculus (Mouse).